The following is a 139-amino-acid chain: Type II methyltransferase M.AquIB (139 aa).

The region spanning 1 to 135 (MDIKNVHIKN…KAVSEQLLDV (135 aa)) is the SAM-dependent MTase C5-type domain. Residues 38 to 58 (KTFGSTYRRLDPNQPSPTVTR) are disordered.

The protein belongs to the class I-like SAM-binding methyltransferase superfamily. C5-methyltransferase family. Heterodimer of an alpha and a beta subunit.

It carries out the reaction a 2'-deoxycytidine in DNA + S-adenosyl-L-methionine = a 5-methyl-2'-deoxycytidine in DNA + S-adenosyl-L-homocysteine + H(+). In terms of biological role, a methylase, recognizes the double-stranded sequence 5'-CYCGRG-3', methylates C-1 on both strands, and protects the DNA from cleavage by the AquI endonuclease. This is Type II methyltransferase M.AquIB (aquIMB) from Picosynechococcus sp. (strain ATCC 27264 / PCC 7002 / PR-6) (Agmenellum quadruplicatum).